A 200-amino-acid polypeptide reads, in one-letter code: FMN-dependent NADH:quinone oxidoreductase 2 (200 aa).

135–138 (SRGG) contributes to the FMN binding site.

This sequence belongs to the azoreductase type 1 family. Homodimer. Requires FMN as cofactor.

The catalysed reaction is 2 a quinone + NADH + H(+) = 2 a 1,4-benzosemiquinone + NAD(+). The enzyme catalyses N,N-dimethyl-1,4-phenylenediamine + anthranilate + 2 NAD(+) = 2-(4-dimethylaminophenyl)diazenylbenzoate + 2 NADH + 2 H(+). Quinone reductase that provides resistance to thiol-specific stress caused by electrophilic quinones. In terms of biological role, also exhibits azoreductase activity. Catalyzes the reductive cleavage of the azo bond in aromatic azo compounds to the corresponding amines. The protein is FMN-dependent NADH:quinone oxidoreductase 2 of Clostridium acetobutylicum (strain ATCC 824 / DSM 792 / JCM 1419 / IAM 19013 / LMG 5710 / NBRC 13948 / NRRL B-527 / VKM B-1787 / 2291 / W).